A 341-amino-acid chain; its full sequence is Outer membrane protein U (341 aa).

An N-terminal signal peptide occupies residues 1–21 (MNKTLIALAVSAAAVATGAYA).

This sequence belongs to the Gram-negative porin family. In terms of assembly, homotrimer.

It is found in the cell outer membrane. Its function is as follows. Forms pores that allow passive diffusion of small molecules across the outer membrane. This is Outer membrane protein U (ompU) from Vibrio cholerae serotype O1 (strain ATCC 39315 / El Tor Inaba N16961).